The primary structure comprises 1328 residues: Protein turtle homolog B (1328 aa).

Positions 1–17 (MIWYVATLIASVISTRG) are cleaved as a signal peptide. The Extracellular segment spans residues 18-722 (LVAQGAHGLR…DLTDDGLARP (705 aa)). Ig-like domains lie at 30-115 (PEFV…ECKV), 139-226 (PTFT…LLVQ), 228-320 (PPFI…AYLT), 324-415 (PARV…ARLV), and 420-504 (PYFT…THLT). 2 disulfide bridges follow: Cys45-Cys113 and Cys161-Cys208. N-linked (GlcNAc...) asparagine glycans are attached at residues Asn241 and Asn258. 3 disulfides stabilise this stretch: Cys250–Cys303, Cys346–Cys397, and Cys442–Cys488. 2 Fibronectin type-III domains span residues 512–604 (APGS…TLAF) and 614–708 (LVTP…STDI). An N-linked (GlcNAc...) asparagine glycan is attached at Asn624. Residues 723-743 (VLAGIVATICFLAAAILFSTL) traverse the membrane as a helical segment. The Cytoplasmic segment spans residues 744–1328 (AACFVNKQRK…EPPTTLPTSG (585 aa)). Disordered regions lie at residues 758–817 (RKKD…EKEL), 914–1040 (PMSS…PEPW), and 1106–1328 (KSPG…PTSG). Phosphoserine occurs at positions 775, 783, and 794. A compositionally biased stretch (low complexity) spans 990-1001 (SPLSSVMSSPPL). Polar residues-rich tracts occupy residues 1018-1033 (ENAS…TPTG), 1129-1141 (LVSQ…TSQG), and 1199-1214 (SRLS…SRTG). Residue Arg1136 is modified to Omega-N-methylarginine. 2 positions are modified to phosphoserine: Ser1207 and Ser1215. The segment covering 1246–1273 (SFSRKSTPSSTGSPSQSSRSGSPSYRPT) has biased composition (low complexity). Pro residues-rich tracts occupy residues 1284–1295 (PSPPPGPAPPAP) and 1318–1328 (PEPPTTLPTSG).

It belongs to the immunoglobulin superfamily. Turtle family. Found in a complex with MAGI2 and NLGN2, where it interacts with MAGI2 (via PDZ 5 and PDZ 6 domains). N-glycosylated and sialylated. Not significantly O-glycosylated. Detected in brain.

The protein resides in the cell membrane. It is found in the postsynaptic cell membrane. The protein localises to the postsynaptic density. In terms of biological role, transmembrane protein which is abundantly expressed in interneurons, where it may regulate inhibitory synapse development. May mediate homophilic cell adhesion. This Mus musculus (Mouse) protein is Protein turtle homolog B.